A 331-amino-acid polypeptide reads, in one-letter code: L-lactate dehydrogenase A chain (331 aa).

NAD(+) contacts are provided by residues 29 to 57 (GMVG…MEDK) and arginine 98. The substrate site is built by arginine 105, asparagine 137, and arginine 168. Position 137 (asparagine 137) interacts with NAD(+). Catalysis depends on histidine 192, which acts as the Proton acceptor. Residue threonine 247 participates in substrate binding.

It belongs to the LDH/MDH superfamily. LDH family. Homotetramer.

It localises to the cytoplasm. The enzyme catalyses (S)-lactate + NAD(+) = pyruvate + NADH + H(+). It functions in the pathway fermentation; pyruvate fermentation to lactate; (S)-lactate from pyruvate: step 1/1. In terms of biological role, interconverts simultaneously and stereospecifically pyruvate and lactate with concomitant interconversion of NADH and NAD(+). The polypeptide is L-lactate dehydrogenase A chain (ldha) (Notothenia neglecta (Yellowbelly rockcod)).